A 285-amino-acid chain; its full sequence is Phasyl DNA replicon protein arp (285 aa).

Its function is as follows. Essential for autonomous replication of the phasyl DNA replicon. The sequence is that of Phasyl DNA replicon protein arp (arp) from Escherichia coli.